The following is a 581-amino-acid chain: MKENAASRVVFILLLFLSVSLLNGQSPPEKPKLVKCRSPGKETFTCWWEPGADGGLPTNYTLTYHKEGETLIHECPDYKTGGPNSCYFSKKHTSIWKMYVITVNAINQMGISSSDPLYVHVTYIVEPEPPANLTLELKHPEDRKPYLWIKWSPPTMTDVKSGWFIIQYEIRLKPEKATDWETHFTLKQTQLKIFNLYPGQKYLVQIRCKPDHGYWSEWSPESSIQIPNDFPVKDTSMWIFVAILSAVICLIMVWAVALKGYSMVTCILPPVPGPKIKGFDVHLLEKGKSEELLRALESQDFPPTSDCEDLLMEFIEVDDCEDQQLMPRPSKEHTEQGVKPMHLDLDSDSGRGSCDSPSLLSEKCDEPQAHPSKFHTPEGPEKLENPETNLTCLQAPQSTSVEGKIPYFLANGPKSSTWPFPQPPSLYSPRYSYHNIADVCELALGMAGTTATSLDQTDQHALKASKTIETGREGKATKQRESEGCSSKPDQDTVWPRPQDKTPLISAKPLEYVEIHKVSQDGVLALFPKQNEKFGAPEASKEYSKVSRVTDSNILVLVPDPQAQNLTLLEEPAKKAPPALP.

An N-terminal signal peptide occupies residues 1–24 (MKENAASRVVFILLLFLSVSLLNG). Residues 25-237 (QSPPEKPKLV…NDFPVKDTSM (213 aa)) are Extracellular-facing. Fibronectin type-III domains lie at 27–127 (PPEK…IVEP) and 129–229 (PPAN…IPND). Cys-36 and Cys-46 are oxidised to a cystine. A glycan (N-linked (GlcNAc...) asparagine) is linked at Asn-59. Cys-75 and Cys-86 are joined by a disulfide. A glycan (N-linked (GlcNAc...) asparagine) is linked at Asn-132. 2 residues coordinate Zn(2+): Asp-211 and His-212. The WSXWS motif motif lies at 215–219 (WSEWS). Residues 238 to 258 (WIFVAILSAVICLIMVWAVAL) form a helical membrane-spanning segment. Residues 259–581 (KGYSMVTCIL…PAKKAPPALP (323 aa)) lie on the Cytoplasmic side of the membrane. The Box 1 motif motif lies at 267-275 (ILPPVPGPK). Disordered stretches follow at residues 324–384 (QLMP…EKLE) and 458–499 (DQHA…PRPQ). Composition is skewed to basic and acidic residues over residues 329–349 (PSKEHTEQGVKPMHLDLDSDS), 375–384 (HTPEGPEKLE), and 469–483 (ETGREGKATKQRESE).

This sequence belongs to the type I cytokine receptor family. Type 1 subfamily. In terms of assembly, interacts with SMARCA1. Interacts with NEK3 and VAV2 and this interaction is prolactin-dependent. Expressed in all tissues examined; liver, peripheral blood lymphocytes, endometrium, corpus luteum, intestine, fetal thymus, fetal spleen, fetal liver and fetal brain.

The protein resides in the membrane. Its function is as follows. This is a receptor for the anterior pituitary hormone prolactin. This chain is Prolactin receptor (PRLR), found in Bos taurus (Bovine).